Here is a 402-residue protein sequence, read N- to C-terminus: Flavohemoprotein (402 aa).

The Globin domain occupies 1–136 (MLSEKTIEIV…IADAFISIEA (136 aa)). His85 contributes to the heme b binding site. Active-site charge relay system residues include Tyr95 and Glu135. Positions 147–402 (GGWKDFRNFV…EFFGPAASLQ (256 aa)) are reductase. Residues 150 to 260 (KDFRNFVVVK…SAPAGDFVLN (111 aa)) form the FAD-binding FR-type domain. FAD is bound by residues Tyr188 and 204–207 (RQYS). 273-278 (GVGITP) lines the NADP(+) pocket. 394 to 397 (FFGP) is a binding site for FAD.

This sequence belongs to the globin family. Two-domain flavohemoproteins subfamily. The protein in the C-terminal section; belongs to the flavoprotein pyridine nucleotide cytochrome reductase family. Heme b serves as cofactor. Requires FAD as cofactor.

The catalysed reaction is 2 nitric oxide + NADPH + 2 O2 = 2 nitrate + NADP(+) + H(+). It carries out the reaction 2 nitric oxide + NADH + 2 O2 = 2 nitrate + NAD(+) + H(+). In terms of biological role, is involved in NO detoxification in an aerobic process, termed nitric oxide dioxygenase (NOD) reaction that utilizes O(2) and NAD(P)H to convert NO to nitrate, which protects the bacterium from various noxious nitrogen compounds. Therefore, plays a central role in the inducible response to nitrosative stress. In Bacillus cereus (strain ATCC 10987 / NRS 248), this protein is Flavohemoprotein.